The sequence spans 434 residues: Probable glucuronosyltransferase Os02g0520750 (434 aa).

Topologically, residues 1-10 (MVGARAGRVP) are cytoplasmic. Residues 11 to 31 (AAAAAAAAVLIVAACVFSSLA) form a helical; Signal-anchor for type II membrane protein membrane-spanning segment. The Lumenal portion of the chain corresponds to 32–434 (GAAAAAEVVG…GPVADLKPWK (403 aa)). 2 N-linked (GlcNAc...) asparagine glycosylation sites follow: N160 and N421.

It belongs to the glycosyltransferase 47 family.

It localises to the golgi apparatus membrane. In terms of biological role, involved in the synthesis of glucuronoxylan hemicellulose in secondary cell walls. The chain is Probable glucuronosyltransferase Os02g0520750 from Oryza sativa subsp. japonica (Rice).